The chain runs to 103 residues: Urease subunit beta (103 aa).

Belongs to the urease beta subunit family. In terms of assembly, heterotrimer of UreA (gamma), UreB (beta) and UreC (alpha) subunits. Three heterotrimers associate to form the active enzyme.

The protein resides in the cytoplasm. The catalysed reaction is urea + 2 H2O + H(+) = hydrogencarbonate + 2 NH4(+). The protein operates within nitrogen metabolism; urea degradation; CO(2) and NH(3) from urea (urease route): step 1/1. The polypeptide is Urease subunit beta (Streptomyces avermitilis (strain ATCC 31267 / DSM 46492 / JCM 5070 / NBRC 14893 / NCIMB 12804 / NRRL 8165 / MA-4680)).